Here is a 336-residue protein sequence, read N- to C-terminus: Galactose/methyl galactoside import permease protein MglC (336 aa).

At 1–16 the chain is on the periplasmic side; sequence MSALNKKSFLTYLKEG. The chain crosses the membrane as a helical span at residues 17-37; that stretch reads GIYVVLLVLLAIIIFQDPTFL. The Cytoplasmic segment spans residues 38–52; that stretch reads SLLNLSNILTQSSVR. A helical membrane pass occupies residues 53 to 73; the sequence is IIIALGVAGLIVTQGTDLSAG. Over 74-106 the chain is Periplasmic; it reads RQVGLAAVVAATLLQSMDNANKVFPEMATMPIA. Helical transmembrane passes span 107–127 and 128–148; these read LVILIVCAIGAVIGLINGLII and AYLNVTPFITTLGTMIIVYGI. Residues 149–180 are Periplasmic-facing; it reads NSLYYDFVGASPISGFDSGFSTFAQGFVALGS. Residues 181–201 form a helical membrane-spanning segment; sequence FRLSYITFYALIAVAFVWVLW. Topologically, residues 202–226 are cytoplasmic; it reads NKTRFGKNIFAIGGNPEAAKVSGVN. A helical membrane pass occupies residues 227–247; sequence VGLNLLMIYALSGVFYAFGGM. Residues 248–256 lie on the Periplasmic side of the membrane; that stretch reads LEAGRIGSA. The chain crosses the membrane as a helical span at residues 257–277; sequence TNNLGFMYELDAIAACVVGGV. Residue Ser278 is a topological domain, cytoplasmic. The helical transmembrane segment at 279 to 299 threads the bilayer; it reads FSGGVGTVIGVVTGVIIFTVI. The Periplasmic segment spans residues 300–305; the sequence is NYGLTY. Residues 306–326 traverse the membrane as a helical segment; sequence IGVNPYWQYIIKGAIIIFAVA. Topologically, residues 327 to 336 are cytoplasmic; the sequence is LDSLKYARKK.

It belongs to the binding-protein-dependent transport system permease family. AraH/RbsC subfamily. In terms of assembly, the complex is composed of one ATP-binding protein (MglA), two transmembrane proteins (MglC) and a solute-binding protein (MglB).

Its subcellular location is the cell inner membrane. In terms of biological role, part of the ABC transporter complex MglABC involved in galactose/methyl galactoside import. Probably responsible for the translocation of the substrate across the membrane. This chain is Galactose/methyl galactoside import permease protein MglC (mglC), found in Escherichia coli (strain K12).